The chain runs to 125 residues: Calcitonin gene-related peptide 1 (125 aa).

A signal peptide spans 1-25; the sequence is MVMLKISSFLAVYALVVCQMDSFQA. Residues 26–77 constitute a propeptide that is removed on maturation; it reads APVRPGLESITDRVTLSDYEARRLLNALVKDFIQMTAEELEQASEGNSVTAQ. Cys-81 and Cys-86 are joined by a disulfide. Phe-116 carries the post-translational modification Phenylalanine amide. Residues 122 to 125 constitute a propeptide that is removed on maturation; that stretch reads SVQI.

The protein belongs to the calcitonin family.

It is found in the secreted. CGRP1/CALCA is a peptide hormone that induces vasodilation mediated by the CALCRL-RAMP1 receptor complex. Dilates a variety of vessels including the coronary, cerebral and systemic vasculature. Its abundance in the CNS also points toward a neurotransmitter or neuromodulator role. It also elevates platelet cAMP. CGRP1 can also bind and activate CALCR-RAMP1 (AMYR1) receptor complex. The protein is Calcitonin gene-related peptide 1 (CALCA) of Gallus gallus (Chicken).